Consider the following 677-residue polypeptide: MLKENQSKWSSAGALIAIGIVFGDIGTSPLYTMNSILNSAKSAHNLDTFVIGSVSLVFWTLMLITTIKYVIIALQADNHGEGGIFALYSRVKKPNKKWLLLPALIGGAALLADGTLTPAVTVTTAIEGLKGQGIGEFIFPNNQTIVLFVVTVILLIVFTFQKAGTKKIGKIFGPVMLTWFLFIGFFGLVNIFSDLSILKALSPTYAIAVLFSPENKTGIFILGSVFLATTGAEALYSDMGHVGKHNIYVSWIFVYTMLILNYMGQGAWIMSHANQENLLMQSSNPFFEILPSGWRIFGVVMAALAAIIASQALISGAYTLVSEAINLKVIPRLRTFYPSEARGQMYIGTVNWLLCIIGLIIVWAFQTSHNMEAAYGLSITITMLMTTLLLYQFIKQEMKNKILAFFFVVIFGMIETVFLIASLGKFLHGGYATLIIMVAILSVMMIWFYGNKRREAISQQNDYLSLKDYRKQLINLSKDNEEPIFASNLVYIVNIHQNYMLKRNIIYSILGSKPKRAETYWFVTIRSSNDPYEKSYSVDMLGTNNIVHVTLNIGFKVEPQVNMYMKQIANNLVKQNIIKPQFPKYTLNKRGTVGEFKYIMANQNYEDLLNLPDIHTWDRFIISGRLWLQSHTVKPSSFYGLEVSDVLEETVPLFIKDSNKSKIKLIQNEVKNVIKPE.

12 helical membrane passes run 13 to 33 (GALI…LYTM), 54 to 74 (VSLV…IIAL), 98 to 118 (WLLL…TLTP), 137 to 157 (FIFP…LLIV), 171 to 191 (IFGP…LVNI), 217 to 237 (TGIF…ALYS), 249 to 269 (VSWI…GAWI), 296 to 316 (IFGV…LISG), 345 to 365 (MYIG…VWAF), 374 to 394 (AYGL…YQFI), 402 to 422 (ILAF…LIAS), and 429 to 449 (GGYA…IWFY).

The protein belongs to the HAK/KUP transporter (TC 2.A.72) family.

Its subcellular location is the cell membrane. The catalysed reaction is K(+)(in) + H(+)(in) = K(+)(out) + H(+)(out). Its function is as follows. Transport of potassium into the cell. Likely operates as a K(+):H(+) symporter. The protein is Probable potassium transport system protein Kup of Leuconostoc mesenteroides subsp. mesenteroides (strain ATCC 8293 / DSM 20343 / BCRC 11652 / CCM 1803 / JCM 6124 / NCDO 523 / NBRC 100496 / NCIMB 8023 / NCTC 12954 / NRRL B-1118 / 37Y).